Reading from the N-terminus, the 892-residue chain is Microsomal triglyceride transfer protein homolog (892 aa).

The first 19 residues, methionine 1–alanine 19, serve as a signal peptide directing secretion.

Heterodimer; heterodimerizes with protein disulfide isomerase.

Its subcellular location is the endoplasmic reticulum. Functionally, catalyzes the transport of cholesteryl ester, and phospholipid between phospholipid surfaces. Does not catalyze transport of triglycerides. Required for the assembly and secretion of plasma lipoproteins that contain apolipoprotein B. Required for normal expression of klf-3. This is Microsomal triglyceride transfer protein homolog from Caenorhabditis elegans.